A 504-amino-acid polypeptide reads, in one-letter code: ATP synthase subunit alpha (504 aa).

Residue 169-176 (GDRKTGKT) coordinates ATP.

It belongs to the ATPase alpha/beta chains family. In terms of assembly, F-type ATPases have 2 components, CF(1) - the catalytic core - and CF(0) - the membrane proton channel. CF(1) has five subunits: alpha(3), beta(3), gamma(1), delta(1), epsilon(1). CF(0) has three main subunits: a(1), b(2) and c(9-12). The alpha and beta chains form an alternating ring which encloses part of the gamma chain. CF(1) is attached to CF(0) by a central stalk formed by the gamma and epsilon chains, while a peripheral stalk is formed by the delta and b chains.

Its subcellular location is the cell membrane. The catalysed reaction is ATP + H2O + 4 H(+)(in) = ADP + phosphate + 5 H(+)(out). Produces ATP from ADP in the presence of a proton gradient across the membrane. The alpha chain is a regulatory subunit. The polypeptide is ATP synthase subunit alpha (Lactiplantibacillus plantarum (strain ATCC BAA-793 / NCIMB 8826 / WCFS1) (Lactobacillus plantarum)).